We begin with the raw amino-acid sequence, 100 residues long: MHLMPREQEKLMIVVAADLARRRQARGLKLNFPESVAIISYELIEGARDGRTVADLMSYGTTLLTRDDVMEGVPEMIHDVQIEATFPDGTKLVTVHDPIR.

Belongs to the urease gamma subunit family. Heterotrimer of UreA (gamma), UreB (beta) and UreC (alpha) subunits. Three heterotrimers associate to form the active enzyme.

The protein resides in the cytoplasm. It catalyses the reaction urea + 2 H2O + H(+) = hydrogencarbonate + 2 NH4(+). It functions in the pathway nitrogen metabolism; urea degradation; CO(2) and NH(3) from urea (urease route): step 1/1. This is Urease subunit gamma from Arthrobacter sp. (strain FB24).